The primary structure comprises 218 residues: Pyridoxine/pyridoxamine 5'-phosphate oxidase (218 aa).

Substrate is bound by residues 12 to 15 and R70; that span reads RMSY. FMN contacts are provided by residues 65–70, 80–81, K87, and Q109; these read RTVLLR and YT. Substrate contacts are provided by Y127, R131, and S135. Residues 145-146 and W191 each bind FMN; that span reads QS. 197-199 serves as a coordination point for substrate; sequence RLH. Residue R201 participates in FMN binding.

It belongs to the pyridoxamine 5'-phosphate oxidase family. Homodimer. It depends on FMN as a cofactor.

It catalyses the reaction pyridoxamine 5'-phosphate + O2 + H2O = pyridoxal 5'-phosphate + H2O2 + NH4(+). The enzyme catalyses pyridoxine 5'-phosphate + O2 = pyridoxal 5'-phosphate + H2O2. Its pathway is cofactor metabolism; pyridoxal 5'-phosphate salvage; pyridoxal 5'-phosphate from pyridoxamine 5'-phosphate: step 1/1. The protein operates within cofactor metabolism; pyridoxal 5'-phosphate salvage; pyridoxal 5'-phosphate from pyridoxine 5'-phosphate: step 1/1. Functionally, catalyzes the oxidation of either pyridoxine 5'-phosphate (PNP) or pyridoxamine 5'-phosphate (PMP) into pyridoxal 5'-phosphate (PLP). The polypeptide is Pyridoxine/pyridoxamine 5'-phosphate oxidase (Acinetobacter baylyi (strain ATCC 33305 / BD413 / ADP1)).